Consider the following 216-residue polypeptide: uncharacterized protein (216 aa).

The first 17 residues, 1 to 17 (MLKKIIILFLGMFLLSA), serve as a signal peptide directing secretion. A lipid anchor (N-palmitoyl cysteine) is attached at cysteine 18. Cysteine 18 is lipidated: S-diacylglycerol cysteine. The stretch at 133 to 162 (SDKEKKIQEELNQIKAMLRETKRDISKYTC) forms a coiled coil.

It localises to the cell membrane. This is an uncharacterized protein from Rickettsia conorii (strain ATCC VR-613 / Malish 7).